The sequence spans 326 residues: Glutaredoxin 3 (326 aa).

Positions 1–108 constitute a Thioredoxin domain; the sequence is MANFTDAASL…LTNKVQRLGS (108 aa). 2 consecutive Glutaredoxin domains span residues 125–227 and 227–326; these read NQRL…VSLE and ENRL…KGEN. [2Fe-2S] cluster contacts are provided by cysteine 150 and cysteine 252.

In terms of assembly, homodimer; the homodimer is independent of 2Fe-2S clusters. Heterotrimer; forms a heterotrimeric complex composed by two bola2 molecules and one glrx3 molecule; linked by [2Fe-2S] clusters.

The protein resides in the cytoplasm. It is found in the cytosol. Its function is as follows. Together with bola2, acts as a cytosolic iron-sulfur (Fe-S) cluster assembly factor that facilitates [2Fe-2S] cluster insertion into a subset of cytosolic proteins. Required for hemoglobin maturation. Does not possess any thyoredoxin activity since it lacks the conserved motif that is essential for catalytic activity. The polypeptide is Glutaredoxin 3 (glrx3) (Danio rerio (Zebrafish)).